Consider the following 331-residue polypeptide: Protein RecA (331 aa).

Residue 66–73 coordinates ATP; it reads GPESSGKT.

It belongs to the RecA family.

It is found in the cytoplasm. In terms of biological role, can catalyze the hydrolysis of ATP in the presence of single-stranded DNA, the ATP-dependent uptake of single-stranded DNA by duplex DNA, and the ATP-dependent hybridization of homologous single-stranded DNAs. It interacts with LexA causing its activation and leading to its autocatalytic cleavage. The chain is Protein RecA from Acholeplasma laidlawii.